Consider the following 274-residue polypeptide: Sulfur carrier protein FdhD (274 aa).

Residue C120 is the Cysteine persulfide intermediate of the active site.

Belongs to the FdhD family.

It localises to the cytoplasm. Required for formate dehydrogenase (FDH) activity. Acts as a sulfur carrier protein that transfers sulfur from IscS to the molybdenum cofactor prior to its insertion into FDH. The chain is Sulfur carrier protein FdhD from Burkholderia mallei (strain ATCC 23344).